Here is a 178-residue protein sequence, read N- to C-terminus: Caveolin-1 (178 aa).

Ser2 is subject to N-acetylserine. Ser2 is modified (phosphoserine). The segment at 2–94 is required for homooligomerization; the sequence is SGGKYVDSEG…WKASFTTFTV (93 aa). The Cytoplasmic segment spans residues 2 to 104; sequence SGGKYVDSEG…TKYWFYRLLS (103 aa). At Lys5 the chain carries N6-acetyllysine; alternate. Lys5 is covalently cross-linked (Glycyl lysine isopeptide (Lys-Gly) (interchain with G-Cter in ubiquitin); alternate). The residue at position 6 (Tyr6) is a Phosphotyrosine. At Ser9 the chain carries Phosphoserine. At Tyr14 the chain carries Phosphotyrosine; by ABL1. Position 25 is a phosphotyrosine (Tyr25). Residues Lys26, Lys30, Lys39, Lys47, and Lys57 each participate in a glycyl lysine isopeptide (Lys-Gly) (interchain with G-Cter in ubiquitin) cross-link. The interaction with CAVIN3 stretch occupies residues 82–94; that stretch reads DGIWKASFTTFTV. The helical intramembrane region spans 105–125; that stretch reads ALFGIPMALIWGIYFAILSFL. Over 126-178 the chain is Cytoplasmic; the sequence is HIWAVVPCIKSFLIEIQCISRVYSIYVHTFCDPLFEAIGKIFSNIRINMQKEI. The interval 131-142 is interacts with SPRY1, SPRY2, SPRY3 and SPRY4; the sequence is VPCIKSFLIEIQ. S-palmitoyl cysteine attachment occurs at residues Cys133, Cys143, and Cys156. Residues 149–160 are interacts with SPRY1, SPRY2, and SPRY4; it reads SIYVHTFCDPLF. Residues 167 to 178 form an interacts with SPRY1, SPRY2, SPRY3 and SPRY4 region; sequence FSNIRINMQKEI.

This sequence belongs to the caveolin family. In terms of assembly, homooligomer. Interacts with GLIPR2. Interacts with NOSTRIN. Interacts with SNAP25 and STX1A. Interacts (via the N-terminus) with DPP4; the interaction is direct. Interacts with CTNNB1, CDH1 and JUP. Interacts with PACSIN2; this interaction induces membrane tubulation. Interacts with SLC7A9. Interacts with BMX and BTK. Interacts with TGFBR1. Interacts with CAVIN3 (via leucine-zipper domain) in a cholesterol-sensitive manner. Interacts with CAVIN1. Interacts with EHD2 in a cholesterol-dependent manner. Forms a ternary complex with UBXN6 and VCP; mediates CAV1 targeting to lysosomes for degradation. Interacts with ABCG1; this interaction regulates ABCG1-mediated cholesterol efflux. Interacts with NEU3; this interaction enhances NEU3 sialidase activity within caveola. Interacts (via C-terminus) with SPRY1, SPRY2 (via C-terminus), SPRY3, and SPRY4. Interacts with IGFBP5; this interaction allows trafficking of IGFBP5 from the plasma membrane to the nucleus. Phosphorylated at Tyr-14 by ABL1 in response to oxidative stress. Post-translationally, ubiquitinated. Undergo monoubiquitination and multi- and/or polyubiquitination. Monoubiquitination of N-terminal lysines promotes integration in a ternary complex with UBXN6 and VCP which promotes oligomeric CAV1 targeting to lysosomes for degradation. Ubiquitinated by ZNRF1; leading to degradation and modulation of the TLR4-mediated immune response.

It is found in the golgi apparatus membrane. The protein localises to the cell membrane. It localises to the membrane. Its subcellular location is the caveola. The protein resides in the membrane raft. May act as a scaffolding protein within caveolar membranes. Forms a stable heterooligomeric complex with CAV2 that targets to lipid rafts and drives caveolae formation. Mediates the recruitment of CAVIN proteins (CAVIN1/2/3/4) to the caveolae. Interacts directly with G-protein alpha subunits and can functionally regulate their activity. Involved in the costimulatory signal essential for T-cell receptor (TCR)-mediated T-cell activation. Its binding to DPP4 induces T-cell proliferation and NF-kappa-B activation in a T-cell receptor/CD3-dependent manner. Recruits CTNNB1 to caveolar membranes and may regulate CTNNB1-mediated signaling through the Wnt pathway. Negatively regulates TGFB1-mediated activation of SMAD2/3 by mediating the internalization of TGFBR1 from membrane rafts leading to its subsequent degradation. Binds 20(S)-hydroxycholesterol (20(S)-OHC). This Muntiacus muntjak (Barking deer) protein is Caveolin-1 (CAV1).